The chain runs to 184 residues: Phosphodiesterase YfcE (184 aa).

Mn(2+) contacts are provided by D9, H11, D37, N73, H105, H127, and H129.

The protein belongs to the metallophosphoesterase superfamily. YfcE family. Mn(2+) serves as cofactor.

In terms of biological role, shows phosphodiesterase activity. The polypeptide is Phosphodiesterase YfcE (yfcE) (Escherichia coli O157:H7).